A 328-amino-acid chain; its full sequence is Phospholipid scramblase 1 (328 aa).

A proline-rich domain (PRD) region spans residues 1 to 93 (MENHSKQTEA…NHPGGPGGTP (93 aa)). The interval 1-96 (MENHSKQTEA…GGPGGTPWMP (96 aa)) is disordered. At 1–297 (MENHSKQTEA…IQFPLDLDVK (297 aa)) the chain is on the cytoplasmic side. The SH3-binding 1 motif lies at 18-26 (PAGYPPPYP). The PPxY motif signature appears at 22-25 (PPPY). Residues 28-47 (AAFQGPSDHAAYPIPQAGYQ) are compositionally biased toward low complexity. Over residues 49-64 (PPGPYPGPQPGYPVPP) the composition is skewed to pro residues. An SH3-binding 2 motif is present at residues 56-64 (PQPGYPVPP). Tyr83 carries the post-translational modification Phosphotyrosine; by ABL. Positions 93–101 (PWMPAPPPP) match the SH3-binding 3 motif. Phosphothreonine; by PKC/PRKCD is present on Thr170. 4 S-palmitoyl cysteine lipidation sites follow: Cys193, Cys194, Cys197, and Cys198. A Nuclear localization signal motif is present at residues 269 to 275 (SKQWSGF). Residues 298 to 314 (MKAVMLGACFLIDFMFF) traverse the membrane as a helical segment. The Extracellular portion of the chain corresponds to 315–328 (ERTGNEEQRSGAWQ).

It belongs to the phospholipid scramblase family. As to quaternary structure, forms homooligomers in the presence of calcium. Interacts with ABL. Interacts with RELT, RELL1 and RELL2. Interacts with OXSR1 in the presence of RELT. Interacts with OCLN, TOP2A and TOP2B. Interacts with TRPC1, TRPC4 and TRPC5. Interacts with ILDR1. Ca(2+) is required as a cofactor. Requires Mg(2+) as cofactor. Zn(2+) serves as cofactor. Post-translationally, phosphorylation at Thr-170 by PKC/PKCD increases its phospholipid scramblase activity during both cell stimulation and apoptosis. Phosphorylated by OXSR1 in the presence of RELT. Palmitoylation is required for its phospholipid scramblase activity. Palmitoylation regulates its localization to the cell membrane or the nucleus; trafficking to the cell membrane is dependent upon palmitoylation whereas in the absence of palmitoylation, localizes to the nucleus. In terms of tissue distribution, highly expressed in kidney, lung, liver and bone marrow, slightly in spleen, heart and macrophage.

It is found in the cell membrane. It localises to the nucleus. The protein resides in the cytoplasm. Its subcellular location is the perinuclear region. The enzyme catalyses a 1,2-diacyl-sn-glycero-3-phosphocholine(in) = a 1,2-diacyl-sn-glycero-3-phosphocholine(out). The catalysed reaction is a 1,2-diacyl-sn-glycero-3-phosphoethanolamine(in) = a 1,2-diacyl-sn-glycero-3-phosphoethanolamine(out). It carries out the reaction a 1,2-diacyl-sn-glycero-3-phospho-L-serine(in) = a 1,2-diacyl-sn-glycero-3-phospho-L-serine(out). In terms of biological role, catalyzes calcium-induced ATP-independent rapid bidirectional and non-specific distribution of phospholipids (lipid scrambling or lipid flip-flop) between the inner and outer leaflet of the plasma membrane resulting in collapse of the phospholipid asymmetry which leads to phosphatidylserine externalization on the cell surface. Mediates calcium-dependent phosphatidylserine externalization and apoptosis in neurons via its association with TRPC5. Also exhibits magnesium-dependent nuclease activity against double-stranded DNA and RNA but not single-stranded DNA and can enhance DNA decatenation mediated by TOP2A. Negatively regulates FcR-mediated phagocytosis in differentiated macrophages. May contribute to cytokine-regulated cell proliferation and differentiation. The polypeptide is Phospholipid scramblase 1 (Plscr1) (Mus musculus (Mouse)).